We begin with the raw amino-acid sequence, 574 residues long: Sorting nexin-33 (574 aa).

The SH3 domain maps to Met-1 to Ser-61. The segment at Ala-68–Asp-119 is disordered. Ser-77 and Ser-92 each carry phosphoserine. Residues Phe-109–Asp-119 are compositionally biased toward acidic residues. The region spanning Phe-230–Gln-340 is the PX domain. Positions Leu-371 to Leu-574 constitute a BAR domain.

Belongs to the sorting nexin family. Homodimer (via BAR domain). Interacts with ADAM15. Interacts with FASLG. Interacts (via SH3 domain) with DNM1 and DNM2. Interacts with WASL. Interacts with FCHSD1 (via the F-BAR domain). Phosphorylated. In terms of tissue distribution, detected in heart and pancreas.

It localises to the cytoplasm. The protein resides in the cytosol. Its subcellular location is the membrane. The protein localises to the cytoplasmic vesicle membrane. In terms of biological role, plays a role in the reorganization of the cytoskeleton, endocytosis and cellular vesicle trafficking via its interactions with membranes, WASL, DNM1 and DNM2. Acts both during interphase and at the end of mitotic cell divisions. Required for efficient progress through mitosis and cytokinesis. Required for normal formation of the cleavage furrow at the end of mitosis. Modulates endocytosis of cell-surface proteins, such as APP and PRNP; this then modulates the secretion of APP and PRNP peptides. Promotes membrane tubulation (in vitro). May promote the formation of macropinosomes. This chain is Sorting nexin-33 (SNX33), found in Homo sapiens (Human).